Consider the following 550-residue polypeptide: Amino acid transporter AVT1C (550 aa).

Residues 1–11 show a composition bias toward polar residues; that stretch reads MNHVPSDQSFY. Disordered regions lie at residues 1-44 and 128-148; these read MNHV…ENQA and QGLL…EKSS. A compositionally biased stretch (basic and acidic residues) spans 20–34; it reads RKDYVEEDGGSHSDS. A run of 11 helical transmembrane segments spans residues 165–185, 190–210, 237–257, 283–303, 307–327, 342–362, 377–397, 422–442, 462–484, 488–510, and 521–541; these read AVLN…PYAA, WLGL…GILL, IFVS…YIIL, LFAL…DLSV, ISAG…WIGL, LSTL…HAVF, AVLL…AVMG, IAVW…ISPV, IGIR…FFGL, LIGS…LSIV, and LCVL…YSAL.

Belongs to the amino acid/polyamine transporter 2 family. Amino acid/auxin permease (AAAP) (TC 2.A.18.5) subfamily.

The protein resides in the membrane. The chain is Amino acid transporter AVT1C from Arabidopsis thaliana (Mouse-ear cress).